We begin with the raw amino-acid sequence, 274 residues long: Penicillin-insensitive murein endopeptidase (274 aa).

The N-terminal stretch at 1-19 (MKKTAIALLAWFVSSASLA) is a signal peptide. Cystine bridges form between cysteine 44–cysteine 265, cysteine 187–cysteine 235, and cysteine 216–cysteine 223. Zn(2+) contacts are provided by histidine 110, histidine 113, aspartate 120, aspartate 147, histidine 150, and histidine 211. The tract at residues 225–274 (DQPLPPPGDGCGAELQSWFEPPKPGTTKPEKKTPPPLPPSCQALLDEHVL) is disordered.

It belongs to the peptidase M74 family. As to quaternary structure, dimer. Requires Zn(2+) as cofactor.

It localises to the periplasm. Its function is as follows. Murein endopeptidase that cleaves the D-alanyl-meso-2,6-diamino-pimelyl amide bond that connects peptidoglycan strands. Likely plays a role in the removal of murein from the sacculus. This is Penicillin-insensitive murein endopeptidase from Salmonella choleraesuis (strain SC-B67).